The following is a 532-amino-acid chain: Phosphoenolpyruvate carboxykinase (ATP) (532 aa).

Residues arginine 60, tyrosine 195, and lysine 201 each contribute to the substrate site. ATP contacts are provided by residues lysine 201, histidine 221, and 237–245 (GLSGTGKTT). Mn(2+) is bound by residues lysine 201 and histidine 221. Aspartate 258 is a binding site for Mn(2+). ATP is bound by residues glutamate 287, arginine 323, and threonine 448. Arginine 323 is a substrate binding site.

The protein belongs to the phosphoenolpyruvate carboxykinase (ATP) family. Mn(2+) serves as cofactor.

It localises to the cytoplasm. It carries out the reaction oxaloacetate + ATP = phosphoenolpyruvate + ADP + CO2. The protein operates within carbohydrate biosynthesis; gluconeogenesis. Involved in the gluconeogenesis. Catalyzes the conversion of oxaloacetate (OAA) to phosphoenolpyruvate (PEP) through direct phosphoryl transfer between the nucleoside triphosphate and OAA. This is Phosphoenolpyruvate carboxykinase (ATP) from Christiangramia forsetii (strain DSM 17595 / CGMCC 1.15422 / KT0803) (Gramella forsetii).